A 211-amino-acid polypeptide reads, in one-letter code: Dual specificity protein phosphatase 26 (211 aa).

Residues 60–207 (NHADEVWPGL…LLALDRRLRQ (148 aa)) form the Tyrosine-protein phosphatase domain. Cys152 acts as the Phosphocysteine intermediate in catalysis.

This sequence belongs to the protein-tyrosine phosphatase family. Non-receptor class dual specificity subfamily. Interacts with HSF4.

The protein resides in the cytoplasm. The protein localises to the nucleus. It localises to the golgi apparatus. The catalysed reaction is O-phospho-L-tyrosyl-[protein] + H2O = L-tyrosyl-[protein] + phosphate. It catalyses the reaction O-phospho-L-seryl-[protein] + H2O = L-seryl-[protein] + phosphate. The enzyme catalyses O-phospho-L-threonyl-[protein] + H2O = L-threonyl-[protein] + phosphate. Functionally, inactivates MAPK1 and MAPK3 which leads to dephosphorylation of heat shock factor protein 4 and a reduction in its DNA-binding activity. This chain is Dual specificity protein phosphatase 26 (Dusp26), found in Rattus norvegicus (Rat).